The primary structure comprises 253 residues: Neurotrophin-3 (253 aa).

The signal sequence occupies residues 1–18; the sequence is MSILFYVMFLAYLRGVQG. Residues 19–134 constitute a propeptide that is removed on maturation; sequence NSMDQRSLPE…AANRTSRRKR (116 aa). Residues 62–89 are disordered; that stretch reads TLPKAEAPPREPAKSEFQPVTAMGPELL. Residue Asn127 is glycosylated (N-linked (GlcNAc...) asparagine). Cystine bridges form between Cys148–Cys213, Cys191–Cys242, and Cys201–Cys244.

The protein belongs to the NGF-beta family.

It is found in the secreted. Seems to promote the survival of visceral and proprioceptive sensory neurons. This chain is Neurotrophin-3 (NTF3), found in Bos taurus (Bovine).